A 305-amino-acid polypeptide reads, in one-letter code: MHLLDLDVLSREDVLKIIEYGIYFKKNRRKHEKILEGKSVAILFEKPSTRTRMSFDIAVYELGGHPLIMNQNEIHLGKKESIKDTAKVMGRYVDTIVARVYKHRHLEEMAKYSSVPVINALSDLAHPCQILADLMTIKEYKGKFKGLKIAYLGDGNNVCNSLILGSALVGMDTYVGTPKGYEPNAKVVLKAKEIINNYGEGSLTLTNDPIEAAEDADVLYTDVWISMGDDKDKEEVLKIFPPFQINSKLLEYAKDDVIVMHCLPANRGYEITDDVIDGEHSVVYDEAENRLHVQKGVFKFIFERK.

Carbamoyl phosphate contacts are provided by residues 48–51, Arg-99, and 126–129; these read STRT and HPCQ. L-ornithine-binding positions include Asn-157, Asp-222, and 226 to 227; that span reads SM. Carbamoyl phosphate contacts are provided by residues 262-263 and Arg-290; that span reads CL.

It belongs to the aspartate/ornithine carbamoyltransferase superfamily. OTCase family.

The protein resides in the cytoplasm. It carries out the reaction carbamoyl phosphate + L-ornithine = L-citrulline + phosphate + H(+). It functions in the pathway amino-acid biosynthesis; L-arginine biosynthesis; L-arginine from L-ornithine and carbamoyl phosphate: step 1/3. Functionally, reversibly catalyzes the transfer of the carbamoyl group from carbamoyl phosphate (CP) to the N(epsilon) atom of ornithine (ORN) to produce L-citrulline. The protein is Ornithine carbamoyltransferase (argF) of Methanocaldococcus jannaschii (strain ATCC 43067 / DSM 2661 / JAL-1 / JCM 10045 / NBRC 100440) (Methanococcus jannaschii).